The sequence spans 505 residues: Cytochrome P450 52C1 (505 aa).

A helical membrane pass occupies residues 4–21 (LFCFLAGIIVVYKAAQYY). C453 contributes to the heme binding site.

The protein belongs to the cytochrome P450 family. Heme serves as cofactor.

The protein resides in the membrane. Functionally, together with an NADPH cytochrome P450 the enzyme system catalyzes the terminal hydroxylation as the first step in the assimilation of alkanes and fatty acids. This Candida tropicalis (Yeast) protein is Cytochrome P450 52C1 (CYP52C1).